Consider the following 329-residue polypeptide: Malate dehydrogenase (329 aa).

12–18 (GAAGQIG) serves as a coordination point for NAD(+). Substrate-binding residues include Arg-93 and Arg-99. NAD(+) is bound by residues Asn-106, Gln-113, and 130 to 132 (TGN). Asn-132 and Arg-163 together coordinate substrate. His-188 serves as the catalytic Proton acceptor.

This sequence belongs to the LDH/MDH superfamily. MDH type 2 family.

The catalysed reaction is (S)-malate + NAD(+) = oxaloacetate + NADH + H(+). Its function is as follows. Catalyzes the reversible oxidation of malate to oxaloacetate. This Mycolicibacterium paratuberculosis (strain ATCC BAA-968 / K-10) (Mycobacterium paratuberculosis) protein is Malate dehydrogenase.